The primary structure comprises 148 residues: Small ribosomal subunit protein eS19 (148 aa).

The protein belongs to the eukaryotic ribosomal protein eS19 family. As to quaternary structure, part of the 30S ribosomal subunit.

May be involved in maturation of the 30S ribosomal subunit. The protein is Small ribosomal subunit protein eS19 of Methanocaldococcus jannaschii (strain ATCC 43067 / DSM 2661 / JAL-1 / JCM 10045 / NBRC 100440) (Methanococcus jannaschii).